The chain runs to 152 residues: MHPAHLLVLLAVCVSLLGSSEIPQPSLDFEQFSNMIQCTIPCGESCLAYMDYGCYCGPGGSGTPIDDLDRCCKTHDECYAEAGKLSACKSVLSEPNNDTYSYECNEGQLTCNDDNDECKAFICNCDRTAVTCFAGAPYNDLNYNIGMIEHCK.

Residues 1–19 (MHPAHLLVLLAVCVSLLGS) form the signal peptide. 8 disulfide bridges follow: Cys-38-Cys-104, Cys-42-Cys-46, Cys-54-Cys-151, Cys-56-Cys-72, Cys-71-Cys-132, Cys-78-Cys-125, Cys-88-Cys-118, and Cys-111-Cys-123. Residue Asn-97 is glycosylated (N-linked (GlcNAc...) asparagine).

This sequence belongs to the phospholipase A2 family. Group I subfamily. D49 sub-subfamily. As to quaternary structure, heterotrimer of alpha, beta, and gamma chains; non-covalently linked. Post-translationally, contains 0.9% fucose, 2.2% mannose, 4.2% N-acetyl-D-glucosamine, 3.5% galactose, and 3.8% N-acetyl-neuraminic acid (sialic acid). Expressed by the venom gland.

Its subcellular location is the secreted. Heterotrimer: Snake venom phospholipase A2 (PLA2) heterotrimer that acts as a potent presynaptic neurotoxin by blocking synaptic transmission and synaptic vesicle recycling. May act by binding in a calcium-dependent fashion to neurotonal pentraxin-1 (NPTX1) and neurotonal pentraxin-2 (NPTX2), but not to neuronal pentraxin receptor (NPTXR). Also binds to taipoxin-associated calcium binding protein 49 (RCN2), a protein localized in the lumen of endoplasmic reticulum. In terms of biological role, monomer (gamma chain): Snake venom phospholipase A2 homolog that is neither toxic nor enzymatically active. Does not bind calcium. The sequence is that of Acidic phospholipase A2 homolog taipoxin gamma chain from Oxyuranus scutellatus scutellatus (Australian taipan).